A 320-amino-acid polypeptide reads, in one-letter code: Thymidylate synthase (320 aa).

DUMP-binding positions include R27 and 182–183 (RR). The active-site Nucleophile is the C202. DUMP is bound by residues 222-225 (RSAD), N233, and 263-265 (HIY). D225 serves as a coordination point for (6R)-5,10-methylene-5,6,7,8-tetrahydrofolate. Residue A319 participates in (6R)-5,10-methylene-5,6,7,8-tetrahydrofolate binding.

Belongs to the thymidylate synthase family. Bacterial-type ThyA subfamily. As to quaternary structure, homodimer.

The protein resides in the cytoplasm. It catalyses the reaction dUMP + (6R)-5,10-methylene-5,6,7,8-tetrahydrofolate = 7,8-dihydrofolate + dTMP. It participates in pyrimidine metabolism; dTTP biosynthesis. Functionally, catalyzes the reductive methylation of 2'-deoxyuridine-5'-monophosphate (dUMP) to 2'-deoxythymidine-5'-monophosphate (dTMP) while utilizing 5,10-methylenetetrahydrofolate (mTHF) as the methyl donor and reductant in the reaction, yielding dihydrofolate (DHF) as a by-product. This enzymatic reaction provides an intracellular de novo source of dTMP, an essential precursor for DNA biosynthesis. The polypeptide is Thymidylate synthase (Limosilactobacillus reuteri (strain DSM 20016) (Lactobacillus reuteri)).